The sequence spans 209 residues: Large ribosomal subunit protein uL3 (209 aa).

A disordered region spans residues 118–151; it reads GFQGAIKRHGQSRGPMSHGSRYHRRPGSMGPVAP.

This sequence belongs to the universal ribosomal protein uL3 family. As to quaternary structure, part of the 50S ribosomal subunit. Forms a cluster with proteins L14 and L19.

Functionally, one of the primary rRNA binding proteins, it binds directly near the 3'-end of the 23S rRNA, where it nucleates assembly of the 50S subunit. The sequence is that of Large ribosomal subunit protein uL3 from Enterococcus faecalis (strain ATCC 700802 / V583).